Reading from the N-terminus, the 489-residue chain is Transcription factor TGAL11 (489 aa).

A compositionally biased stretch (low complexity) spans 87–99 (AATATATARPPAT). Residues 87–181 (AATATATARP…SDHRMTKTLD (95 aa)) form a disordered region. The segment covering 121 to 139 (SNVTADTTDSESSSKNNGD) has biased composition (polar residues). Over residues 148-159 (ASQFDQIPQQQQ) the composition is skewed to low complexity. Over residues 171–181 (HSDHRMTKTLD) the composition is skewed to basic and acidic residues. Positions 181–225 (DPKIMRRLAQNREAARKSRLRKKAYIQQLESSKLRLAQMEQDLER) constitute a bZIP domain. Residues 183–203 (KIMRRLAQNREAARKSRLRKK) are basic motif. The tract at residues 209–223 (LESSKLRLAQMEQDL) is leucine-zipper. The 216-residue stretch at 245-460 (AAMFDAEYGR…RALSSLWASR (216 aa)) folds into the DOG1 domain.

Belongs to the bZIP family.

Its subcellular location is the nucleus. Its function is as follows. Transcriptional regulator involved in defense response. This chain is Transcription factor TGAL11, found in Oryza sativa subsp. japonica (Rice).